The following is a 295-amino-acid chain: Light-independent protochlorophyllide reductase iron-sulfur ATP-binding protein (295 aa).

ATP is bound by residues 10–15 and Lys-39; that span reads GIGKST. Ser-14 provides a ligand contact to Mg(2+). Residues Cys-95 and Cys-129 each coordinate [4Fe-4S] cluster. 180–181 lines the ATP pocket; sequence NR. A compositionally biased stretch (basic and acidic residues) spans 275–289; that stretch reads TKDKKENKKEDKENS. The disordered stretch occupies residues 275-295; the sequence is TKDKKENKKEDKENSADFTWL.

Belongs to the NifH/BchL/ChlL family. As to quaternary structure, homodimer. Protochlorophyllide reductase is composed of three subunits; ChlL, ChlN and ChlB. It depends on [4Fe-4S] cluster as a cofactor.

It localises to the plastid. It is found in the chloroplast. It carries out the reaction chlorophyllide a + oxidized 2[4Fe-4S]-[ferredoxin] + 2 ADP + 2 phosphate = protochlorophyllide a + reduced 2[4Fe-4S]-[ferredoxin] + 2 ATP + 2 H2O. It functions in the pathway porphyrin-containing compound metabolism; chlorophyll biosynthesis (light-independent). Functionally, component of the dark-operative protochlorophyllide reductase (DPOR) that uses Mg-ATP and reduced ferredoxin to reduce ring D of protochlorophyllide (Pchlide) to form chlorophyllide a (Chlide). This reaction is light-independent. The L component serves as a unique electron donor to the NB-component of the complex, and binds Mg-ATP. The sequence is that of Light-independent protochlorophyllide reductase iron-sulfur ATP-binding protein from Physcomitrium patens (Spreading-leaved earth moss).